Consider the following 371-residue polypeptide: 2-aminoethylphosphonate--pyruvate transaminase (371 aa).

Lys-198 carries the N6-(pyridoxal phosphate)lysine modification.

Belongs to the class-V pyridoxal-phosphate-dependent aminotransferase family. PhnW subfamily. In terms of assembly, homodimer. The cofactor is pyridoxal 5'-phosphate.

The enzyme catalyses (2-aminoethyl)phosphonate + pyruvate = phosphonoacetaldehyde + L-alanine. In terms of biological role, involved in phosphonate degradation. In Syntrophobacter fumaroxidans (strain DSM 10017 / MPOB), this protein is 2-aminoethylphosphonate--pyruvate transaminase.